The following is a 3674-amino-acid chain: Dystrophin (3674 aa).

An actin-binding region spans residues 1 to 236; it reads MSEVSSDERE…YVTSLFQVLP (236 aa). Calponin-homology (CH) domains lie at 11–115 and 130–236; these read DVQK…LHWQ and TNSE…QVLP. Residues 59-68 form an ANK2- and ANK-3 binding region; that stretch reads PKEKGSTRVH. Residues 306–318 are compositionally biased toward polar residues; it reads SDPTRSPFPSQRL. The interval 306–325 is disordered; that stretch reads SDPTRSPFPSQRLESPEDKS. Spectrin repeat units follow at residues 335–443, 444–552, 555–663, 715–824, 826–930, 939–1041, 1044–1150, 1153–1259, 1262–1363, 1364–1459, 1464–1564, 1567–1672, 1675–1774, 1775–1870, 1873–1975, 1988–2097, 2100–2204, 2207–2314, 2315–2412, 2464–2566, 2569–2675, 2678–2791, 2797–2919, and 2924–3029; these read VNLD…NLHK, VLMD…LLQD, LKWQ…QISQ, EIRK…WLEY, NRII…ELQI, RYQE…KLEE, AKLR…ALKG, DKTI…TLEE, ACWH…LLEQ, SIQS…LFQK, EQRL…QLEK, KLSR…LLLE, KHME…KASI, PLKE…KALE, HQWY…TVHE, EISY…KFDR, EKWR…RLEE, NILS…EIEA, HIKD…LRAK, FNRA…QLNE, KDST…VLEE, RLLQ…HLEA, KRLH…RKID, and RLQE…QLHE. Residues 1411 to 1909 are interaction with SYNM; the sequence is SDLTSHEISL…PEPQDEKKIK (499 aa). Residues 3044-3077 enclose the WW domain; sequence TSVQGPWERAISPNKVPYYINHETQTTCWDHPKM. An interaction with SYNM region spans residues 3047–3397; that stretch reads QGPWERAISP…TVLEGDNMET (351 aa). A ZZ-type; degenerate zinc finger spans residues 3297-3353; it reads KHQAKCNICKECPIIGFRYRSLKHFNYDICQSCFFSGRVAKGHKMHYPMVEYCTPTT. C3302, C3305, C3326, and C3329 together coordinate Zn(2+). The segment at 3455–3507 is binds to SNTB1; it reads DDEHLLIQHYCQSLNQDSPLSQPRSPAQILISLESEERGELERILADLEEENR. Phosphoserine occurs at positions 3472, 3479, and 3489. Disordered regions lie at residues 3517 to 3543 and 3590 to 3674; these read KQQH…QSPR and QAEA…EDTM. Polar residues-rich tracts occupy residues 3596–3615 and 3651–3662; these read NGTT…SSQP and QLNNSFPSSRGR. Phosphoserine is present on residues S3601, S3602, S3606, S3612, S3613, and S3655.

In terms of assembly, interacts with SYNM. Interacts with the syntrophins SNTG1 and SNTG2. Interacts with KRT19. Component of the dystrophin-associated glycoprotein complex which is composed of three subcomplexes: a cytoplasmic complex comprised of DMD (or UTRN), DTNA and a number of syntrophins, such as SNTB1, SNTB2, SNTG1 and SNTG2, the transmembrane dystroglycan complex, and the sarcoglycan-sarcospan complex. Interacts with DAG1 (betaDAG1) with DMD; the interaction is inhibited by phosphorylation on the PPXY motif of DAG1. Interacts with SYNM; SNTA1 and SNTB1. Interacts with CMYA5. Directly interacts with ANK2 and ANK3; these interactions do not interfere with betaDAG1-binding and are necessary for proper localization in muscle cells. Identified in a dystroglycan complex that contains at least PRX, DRP2, UTRN, DMD and DAG1. Interacts with DTNB. Interacts with PGM5; the interaction is direct. Interacts with NOS1; localizes NOS1 to sarcolemma in muscle cells. As to expression, in the retina, expressed in the outer plexiform layer (OPL) and around the blood vessels. Also observed at the vitreal border of the retina corresponding to the inner limiting membrane (ILM). Presynaptically localized in cone pedicles and postsynaptically in bipolar cells (at protein level).

It is found in the cell membrane. The protein resides in the sarcolemma. The protein localises to the cytoplasm. Its subcellular location is the cytoskeleton. It localises to the postsynaptic cell membrane. Its function is as follows. Anchors the extracellular matrix to the cytoskeleton via F-actin. Ligand for dystroglycan. Component of the dystrophin-associated glycoprotein complex which accumulates at the neuromuscular junction (NMJ) and at a variety of synapses in the peripheral and central nervous systems and has a structural function in stabilizing the sarcolemma. Also implicated in signaling events and synaptic transmission. The protein is Dystrophin of Sus scrofa (Pig).